The chain runs to 167 residues: MLNRLESLTQRVGGSNELIDQWLHARKELLVSYCTVIGIKPQKGKHTPLNEKALENFCHNLVDYLSSGHFHIYDRIIKQVEGASSPKMALTTKVYPALKNNTQTIMAFHDRYTNIEIDDDSCTEFQQALSDIGEALDARFRLEDQLIQWAAESWQAAKPVIQAGQVK.

The protein belongs to the Rsd/AlgQ family. Interacts with RpoD.

The protein resides in the cytoplasm. In terms of biological role, binds RpoD and negatively regulates RpoD-mediated transcription activation by preventing the interaction between the primary sigma factor RpoD with the catalytic core of the RNA polymerase and with promoter DNA. May be involved in replacement of the RNA polymerase sigma subunit from RpoD to RpoS during the transition from exponential growth to the stationary phase. The sequence is that of Regulator of sigma D from Yersinia enterocolitica serotype O:8 / biotype 1B (strain NCTC 13174 / 8081).